Here is an 864-residue protein sequence, read N- to C-terminus: Leucine--tRNA ligase (864 aa).

A 'HIGH' region motif is present at residues 42-52 (PYPSGKLHMGH). Residues 624–628 (KMSKS) carry the 'KMSKS' region motif. Lys627 contributes to the ATP binding site.

The protein belongs to the class-I aminoacyl-tRNA synthetase family.

The protein localises to the cytoplasm. The catalysed reaction is tRNA(Leu) + L-leucine + ATP = L-leucyl-tRNA(Leu) + AMP + diphosphate. The polypeptide is Leucine--tRNA ligase (Burkholderia pseudomallei (strain 668)).